The sequence spans 462 residues: Glutamate--tRNA ligase 1 (462 aa).

A 'HIGH' region motif is present at residues 8–18 (PSPTGYLHIGG). The 'KMSKS' region signature appears at 237 to 241 (KLSKR). Lysine 240 contacts ATP.

Belongs to the class-I aminoacyl-tRNA synthetase family. Glutamate--tRNA ligase type 1 subfamily. Monomer.

It localises to the cytoplasm. The enzyme catalyses tRNA(Glu) + L-glutamate + ATP = L-glutamyl-tRNA(Glu) + AMP + diphosphate. In terms of biological role, catalyzes the attachment of glutamate to tRNA(Glu) in a two-step reaction: glutamate is first activated by ATP to form Glu-AMP and then transferred to the acceptor end of tRNA(Glu). This Sulfurimonas denitrificans (strain ATCC 33889 / DSM 1251) (Thiomicrospira denitrificans (strain ATCC 33889 / DSM 1251)) protein is Glutamate--tRNA ligase 1.